Here is a 287-residue protein sequence, read N- to C-terminus: ATP synthase gamma chain (287 aa).

Belongs to the ATPase gamma chain family. In terms of assembly, F-type ATPases have 2 components, CF(1) - the catalytic core - and CF(0) - the membrane proton channel. CF(1) has five subunits: alpha(3), beta(3), gamma(1), delta(1), epsilon(1). CF(0) has three main subunits: a, b and c.

Its subcellular location is the cell inner membrane. Functionally, produces ATP from ADP in the presence of a proton gradient across the membrane. The gamma chain is believed to be important in regulating ATPase activity and the flow of protons through the CF(0) complex. This chain is ATP synthase gamma chain, found in Klebsiella pneumoniae (strain 342).